A 1102-amino-acid chain; its full sequence is Trafficking protein particle complex II-specific subunit 130 (1102 aa).

The protein belongs to the TMEM1 family. In terms of assembly, part of the multisubunit TRAPP (transport protein particle) II complex composed of BET3, BET5, TRS20, TRS23, TRS31, TRS33, TRS65, TRS120 and TRS130. Interacts with YPT31 and YPT32.

The protein localises to the golgi apparatus. Its function is as follows. Specific subunit of the TRAPP II complex, a highly conserved vesicle tethering complex that functions in the late Golgi as a guanine nucleotide exchange factor (GEF) for the Golgi YPT1 GTPase. TRS130 plays a role in the YPT GEF activity of TRAPP II in concert with the two other TRAPP II-specific subunits TRS65 and TRS120. Required for both the cytoplasm-to-vacuole targeting (Cvt) pathway and starvation-induced autophagy through its role in ATG8 and ATG9 trafficking. The chain is Trafficking protein particle complex II-specific subunit 130 (TRS130) from Saccharomyces cerevisiae (strain ATCC 204508 / S288c) (Baker's yeast).